Here is an 83-residue protein sequence, read N- to C-terminus: Kunitz-type serine protease inhibitor homolog beta-bungarotoxin B chain (83 aa).

A signal peptide spans Met-1 to Ser-24. Residues Cys-31 to Cys-81 enclose the BPTI/Kunitz inhibitor domain. Disulfide bonds link Cys-31–Cys-81, Cys-40–Cys-64, and Cys-56–Cys-77.

This sequence belongs to the venom Kunitz-type family. In terms of assembly, heterodimer with beta-bungarotoxin A1 chain; disulfide-linked. The A chain has phospholipase A2 activity and the B chain shows homology with the basic protease inhibitors. Expressed by the venom gland.

The protein resides in the secreted. Its function is as follows. Beta-bungarotoxin is a presynaptic neurotoxin of the venom. The B chain is homologous to venom basic protease inhibitors but has no protease inhibitor activity and is non-toxic. In Bungarus flaviceps flaviceps (Red-headed krait), this protein is Kunitz-type serine protease inhibitor homolog beta-bungarotoxin B chain.